Consider the following 414-residue polypeptide: 2,3-diketo-5-methylthiopentyl-1-phosphate enolase (414 aa).

Catalysis depends on K99, which acts as the Proton acceptor. Substrate is bound by residues K148, 174-177, H265, G338, and 360-361; these read KDDE and GG. Mg(2+)-binding residues include K174, D176, and E177. The residue at position 174 (K174) is an N6-carboxylysine.

Belongs to the RuBisCO large chain family. Type IV subfamily. Homodimer. Mg(2+) serves as cofactor.

The enzyme catalyses 5-methylsulfanyl-2,3-dioxopentyl phosphate = 2-hydroxy-5-methylsulfanyl-3-oxopent-1-enyl phosphate. It participates in amino-acid biosynthesis; L-methionine biosynthesis via salvage pathway; L-methionine from S-methyl-5-thio-alpha-D-ribose 1-phosphate: step 3/6. Its function is as follows. Catalyzes the enolization of 2,3-diketo-5-methylthiopentyl-1-phosphate (DK-MTP-1-P) into 2-hydroxy-3-keto-5-methylthiopentenyl-1-phosphate (HK-MTPenyl-1-P). This chain is 2,3-diketo-5-methylthiopentyl-1-phosphate enolase, found in Bacillus cereus (strain G9842).